Reading from the N-terminus, the 488-residue chain is 3-octaprenyl-4-hydroxybenzoate carboxy-lyase (488 aa).

Asn-172 contacts Mn(2+). Prenylated FMN contacts are provided by residues 175-177 (IYR), 189-191 (RWL), and 194-195 (RG). Residue Glu-238 coordinates Mn(2+). Asp-287 acts as the Proton donor in catalysis.

It belongs to the UbiD family. Homohexamer. The cofactor is prenylated FMN. It depends on Mn(2+) as a cofactor.

It is found in the cell membrane. The catalysed reaction is a 4-hydroxy-3-(all-trans-polyprenyl)benzoate + H(+) = a 2-(all-trans-polyprenyl)phenol + CO2. Its pathway is cofactor biosynthesis; ubiquinone biosynthesis. Functionally, catalyzes the decarboxylation of 3-octaprenyl-4-hydroxy benzoate to 2-octaprenylphenol, an intermediate step in ubiquinone biosynthesis. The sequence is that of 3-octaprenyl-4-hydroxybenzoate carboxy-lyase from Legionella pneumophila subsp. pneumophila (strain Philadelphia 1 / ATCC 33152 / DSM 7513).